The sequence spans 34 residues: MPNLQTVAQLLALFVIITSGPAIIILIALRRGNL.

A helical membrane pass occupies residues 7 to 27 (VAQLLALFVIITSGPAIIILI).

The protein belongs to the Psb30/Ycf12 family. In terms of assembly, PSII is composed of 1 copy each of membrane proteins PsbA, PsbB, PsbC, PsbD, PsbE, PsbF, PsbH, PsbI, PsbJ, PsbK, PsbL, PsbM, PsbT, PsbX, PsbY, PsbZ, Psb30/Ycf12, peripheral proteins of the oxygen-evolving complex and a large number of cofactors. It forms dimeric complexes.

It is found in the plastid. Its subcellular location is the chloroplast thylakoid membrane. Its function is as follows. A core subunit of photosystem II (PSII), probably helps stabilize the reaction center. The protein is Photosystem II reaction center protein Psb30 of Guillardia theta (Cryptophyte).